The primary structure comprises 491 residues: UDP-GalNAc:beta-1,3-N-acetylgalactosaminyltransferase 2 (491 aa).

Topologically, residues 1–2 (MR) are cytoplasmic. Residues 3 to 23 (SAAAALSVCVLAVLLHWICWT) form a helical; Signal-anchor for type II membrane protein membrane-spanning segment. The Lumenal portion of the chain corresponds to 24–491 (DRSAELLGFR…NKCGDPCGCS (468 aa)). 2 N-linked (GlcNAc...) asparagine glycosylation sites follow: Asn167 and Asn230.

This sequence belongs to the glycosyltransferase 31 family.

The protein resides in the golgi apparatus membrane. It localises to the endoplasmic reticulum. It catalyses the reaction 3-O-(N-acetyl-beta-D-glucosaminyl-(1-&gt;4)-alpha-D-mannosyl)-L-threonyl-[protein] + UDP-N-acetyl-alpha-D-galactosamine = 3-O-[beta-D-GalNAc-(1-&gt;3)-beta-D-GlcNAc-(1-&gt;4)-alpha-D-Man]-L-Thr-[protein] + UDP + H(+). It functions in the pathway protein modification; protein glycosylation. Its function is as follows. Beta-1,3-N-acetylgalactosaminyltransferase that synthesizes a unique carbohydrate structure, GalNAc-beta-1-3GlcNAc, on N- and O-glycans. Has no galactose nor galactosaminyl transferase activity toward any acceptor substrate. Involved in alpha-dystroglycan (dag1) glycosylation. This chain is UDP-GalNAc:beta-1,3-N-acetylgalactosaminyltransferase 2 (b3galnt2), found in Danio rerio (Zebrafish).